Here is a 322-residue protein sequence, read N- to C-terminus: Malate dehydrogenase (322 aa).

NAD(+)-binding positions include 10–15 (GSGQIG) and Asp-34. Residues Arg-83 and Arg-89 each coordinate substrate. NAD(+) is bound by residues Asn-96 and 119 to 121 (ITN). Substrate is bound by residues Asn-121 and Arg-152. Residue His-176 is the Proton acceptor of the active site.

Belongs to the LDH/MDH superfamily. MDH type 3 family.

The catalysed reaction is (S)-malate + NAD(+) = oxaloacetate + NADH + H(+). Its function is as follows. Catalyzes the reversible oxidation of malate to oxaloacetate. The polypeptide is Malate dehydrogenase (Nitrobacter hamburgensis (strain DSM 10229 / NCIMB 13809 / X14)).